The sequence spans 93 residues: UPF0367 protein tsr0804 (93 aa).

Belongs to the UPF0367 family.

This Thermosynechococcus vestitus (strain NIES-2133 / IAM M-273 / BP-1) protein is UPF0367 protein tsr0804.